A 427-amino-acid polypeptide reads, in one-letter code: Acyl-lipid 8-desaturase (427 aa).

A disordered region spans residues 1–24 (MGRGGDSSGQAHPAAELAVPSDRA). One can recognise a Cytochrome b5 heme-binding domain in the interval 36 to 84 (IVLYGKRVDVTKFQRTHPGGSKVFRIFQDRDATEQFESYHSKRAIKMME). The heme site is built by H52 and H75. Residues 178–182 (HSVFK) carry the Histidine box-1 motif. Residues 189 to 209 (VGWNNAAGYFLGFVQGYAVEW) traverse the membrane as a helical segment. The Histidine box-2 signature appears at 213–218 (RHNTHH). Transmembrane regions (helical) follow at residues 261-281 (VPVM…YVAM) and 286-306 (MLPQ…VFAG). A Histidine box-3 motif is present at residues 373-377 (QTEHH).

The protein belongs to the fatty acid desaturase type 1 family. Fe(2+) is required as a cofactor.

The protein resides in the membrane. Its function is as follows. Fatty acid desaturase that introduces a cis double bond at the 8-position in 20-carbon polyunsaturated fatty acids incorporated in a glycerolipid that contain a Delta(8) double bond to yield (20:4(8,11,14,17)). The chain is Acyl-lipid 8-desaturase from Rebecca salina (Marine microalga).